The following is a 440-amino-acid chain: Putative purine permease YwdJ (440 aa).

13 helical membrane-spanning segments follow: residues 3-23 (LVLG…VVPV), 39-59 (LIQS…LKGH), 67-87 (PAGL…TVFA), 96-116 (LQGA…FKVI), 130-150 (VYLL…ILGI), 156-176 (GVDG…FIMT), 188-208 (ILLA…AKPI), 231-251 (GLII…LASM), 283-303 (LLSG…AGFI), 314-334 (FMLG…MNTF), 341-361 (VGFA…FAEF), 374-394 (SIIG…ETAL), and 399-419 (PVFI…AIAA).

This sequence belongs to the nucleobase:cation symporter-2 (NCS2) (TC 2.A.40) family.

The protein localises to the cell membrane. The sequence is that of Putative purine permease YwdJ (ywdJ) from Bacillus subtilis (strain 168).